Consider the following 550-residue polypeptide: Arginine--tRNA ligase (550 aa).

Residues 130 to 140 (ANPTGPIHLGG) carry the 'HIGH' region motif.

It belongs to the class-I aminoacyl-tRNA synthetase family. In terms of assembly, monomer.

The protein localises to the cytoplasm. It catalyses the reaction tRNA(Arg) + L-arginine + ATP = L-arginyl-tRNA(Arg) + AMP + diphosphate. This Corynebacterium efficiens (strain DSM 44549 / YS-314 / AJ 12310 / JCM 11189 / NBRC 100395) protein is Arginine--tRNA ligase.